The primary structure comprises 522 residues: ATP synthase subunit alpha (522 aa).

176 to 183 (GDRQTGKT) contributes to the ATP binding site.

The protein belongs to the ATPase alpha/beta chains family. F-type ATPases have 2 components, CF(1) - the catalytic core - and CF(0) - the membrane proton channel. CF(1) has five subunits: alpha(3), beta(3), gamma(1), delta(1), epsilon(1). CF(0) has four main subunits: a(1), b(1), b'(1) and c(9-12).

The protein localises to the cell membrane. The catalysed reaction is ATP + H2O + 4 H(+)(in) = ADP + phosphate + 5 H(+)(out). Its function is as follows. Produces ATP from ADP in the presence of a proton gradient across the membrane. The alpha chain is a regulatory subunit. The chain is ATP synthase subunit alpha from Chloroflexus aurantiacus (strain ATCC 29366 / DSM 635 / J-10-fl).